The following is a 102-amino-acid chain: MQQARVRLAGTAPEDLDDICDDVREIADKTGVTLSGPVPLPTKTLEIPARKSPDGEGTATWEHWEMRVHKRLIDIDADERALRQLMRIQVPNDVSIEIVLED.

The interval 34–58 (LSGPVPLPTKTLEIPARKSPDGEGT) is disordered.

The protein belongs to the universal ribosomal protein uS10 family. As to quaternary structure, part of the 30S ribosomal subunit.

Involved in the binding of tRNA to the ribosomes. The sequence is that of Small ribosomal subunit protein uS10 from Natronomonas pharaonis (strain ATCC 35678 / DSM 2160 / CIP 103997 / JCM 8858 / NBRC 14720 / NCIMB 2260 / Gabara) (Halobacterium pharaonis).